An 86-amino-acid polypeptide reads, in one-letter code: Small ribosomal subunit protein bS20 (86 aa).

A disordered region spans residues 1–25 (MANIKSQQKRNRTNERARLRNKAVK).

This sequence belongs to the bacterial ribosomal protein bS20 family.

Its function is as follows. Binds directly to 16S ribosomal RNA. The protein is Small ribosomal subunit protein bS20 of Mycobacterium bovis (strain ATCC BAA-935 / AF2122/97).